The primary structure comprises 283 residues: Bifunctional protein FolD 2 (283 aa).

NADP(+) is bound by residues 165-167 (GRG), T192, and V233.

The protein belongs to the tetrahydrofolate dehydrogenase/cyclohydrolase family. Homodimer.

The enzyme catalyses (6R)-5,10-methylene-5,6,7,8-tetrahydrofolate + NADP(+) = (6R)-5,10-methenyltetrahydrofolate + NADPH. The catalysed reaction is (6R)-5,10-methenyltetrahydrofolate + H2O = (6R)-10-formyltetrahydrofolate + H(+). It participates in one-carbon metabolism; tetrahydrofolate interconversion. Its function is as follows. Catalyzes the oxidation of 5,10-methylenetetrahydrofolate to 5,10-methenyltetrahydrofolate and then the hydrolysis of 5,10-methenyltetrahydrofolate to 10-formyltetrahydrofolate. This Nocardioides sp. (strain ATCC BAA-499 / JS614) protein is Bifunctional protein FolD 2.